A 490-amino-acid chain; its full sequence is MVLWLQLALLALLLPTSLAQGEVRGKGTAQAHNSTRPALQRLSDHLLADYRKSVRPVRDWRKPTTVSIDAIVYAILSVDEKNQVLTTYIWYRQFWTDEFLQWNPEDFDNITKLSIPTDSIWVPDILINEFVDVGKSPNIPYVYVRHQGEVQNYKPLQVVTACSLDIYNFPFDVQNCSLTFTSWLHTIQDINISLWRLPEKVKSDKSVFMNQGEWELLGVLTEFLEFSDRESRGSFAEMKFYVVIRRRPLFYAVTLLLPSIFLMIVDIVGFYLPPDSGERVSFKITLLLGYSVFLIIVSDTLPATAIGTPLISVYFVVCMALLVISLAETILIVRLVHKQDLQQPVPLWLRHLVLERIAGLLCLGEQLTSHRGPATLQATKTDDFSGSTLLPAMGNHCGPLGGPQDLEKTSRGRGSPPPPPREASLAMCGLLQELASIRHFLEKREETREVARDWLRVGSVLDKLLFRVYLLAVLAYSITLVTLWSVWHYA.

The signal sequence occupies residues 1-19 (MVLWLQLALLALLLPTSLA). Residues 20-249 (QGEVRGKGTA…FYVVIRRRPL (230 aa)) lie on the Extracellular side of the membrane. Residues Asn33, Asn109, Asn175, and Asn191 are each glycosylated (N-linked (GlcNAc...) asparagine). The cysteines at positions 162 and 176 are disulfide-linked. Residues 250–270 (FYAVTLLLPSIFLMIVDIVGF) form a helical membrane-spanning segment. Residues 271-285 (YLPPDSGERVSFKIT) lie on the Cytoplasmic side of the membrane. A helical transmembrane segment spans residues 286–306 (LLLGYSVFLIIVSDTLPATAI). Over 307 to 312 (GTPLIS) the chain is Extracellular. A helical transmembrane segment spans residues 313-333 (VYFVVCMALLVISLAETILIV). Topologically, residues 334-467 (RLVHKQDLQQ…GSVLDKLLFR (134 aa)) are cytoplasmic. Residues 401–422 (GGPQDLEKTSRGRGSPPPPPRE) are disordered. The segment at 426-462 (AMCGLLQELASIRHFLEKREETREVARDWLRVGSVLD) is HA-stretch; determines single-channel conductance in 5-HT3 receptors. A helical membrane pass occupies residues 468–488 (VYLLAVLAYSITLVTLWSVWH). Over 489–490 (YA) the chain is Extracellular.

It belongs to the ligand-gated ion channel (TC 1.A.9) family. 5-hydroxytryptamine receptor (TC 1.A.9.2) subfamily. HTR3A sub-subfamily. Forms homopentameric as well as heteropentameric serotonin-activated cation-selective channel complexes with HTR3B or HTR3C or HTR3D or HTR3E. The homomeric complex is functional but exhibits low conductance with modified voltage dependence, and decreased agonist and antagonist affinity. Heteropentameric complexes display properties which resemble that of neuronal serotonin-activated channels in vivo. Interacts with RIC3. In terms of tissue distribution, expressed in cortex, intestine and liver. Not expressed in muscle or spleen.

The protein localises to the postsynaptic cell membrane. It is found in the cell membrane. It carries out the reaction Na(+)(in) = Na(+)(out). The enzyme catalyses K(+)(in) = K(+)(out). It catalyses the reaction Ca(2+)(in) = Ca(2+)(out). The catalysed reaction is Mg(2+)(in) = Mg(2+)(out). In terms of biological role, forms serotonin (5-hydroxytryptamine/5-HT3)-activated cation-selective channel complexes, which when activated cause fast, depolarizing responses in neurons. The protein is 5-hydroxytryptamine receptor 3A of Cavia porcellus (Guinea pig).